Here is a 70-residue protein sequence, read N- to C-terminus: UPF0150 protein TM_1311 (70 aa).

It belongs to the UPF0150 family.

The polypeptide is UPF0150 protein TM_1311 (Thermotoga maritima (strain ATCC 43589 / DSM 3109 / JCM 10099 / NBRC 100826 / MSB8)).